The chain runs to 101 residues: Small ribosomal subunit protein eS24 (101 aa).

This sequence belongs to the eukaryotic ribosomal protein eS24 family.

The sequence is that of Small ribosomal subunit protein eS24 from Methanosarcina barkeri (strain Fusaro / DSM 804).